The primary structure comprises 340 residues: MATKASLSIKGFALLVSVLVAVPTRVQSIGVCYGMLGNNLPPPSEVVSLYKSNNIARMRLYDPNQAALQALRNSNIQVLLDVPRSDVQSLASNPSAAGDWIRRNVVAYWPSVSFRYIAVGNELIPGSDLAQYILPAMRNIYNALSSAGLQNQIKVSTAVDTGVLGTSYPPSAGAFSSAAQAYLSPIVQFLASNGAPLLVNVYPYFSYTGNPGQISLPYALFTASGVVVQDGRFSYQNLFDAIVDAVFAALERVGGANVAVVVSESGWPSAGGGAEASTSNARTYNQNLIRHVGGGTPRRPGKEIEAYIFEMFNENQKAGGIEQNFGLFYPNKQPVYQISF.

A signal peptide spans 1 to 28 (MATKASLSIKGFALLVSVLVAVPTRVQS). The active-site Proton donor is the E122. The active-site Nucleophile is E264.

This sequence belongs to the glycosyl hydrolase 17 family. In terms of assembly, monomer. In terms of tissue distribution, expressed in fruit peel and pulp.

It catalyses the reaction Hydrolysis of (1-&gt;3)-beta-D-glucosidic linkages in (1-&gt;3)-beta-D-glucans.. In terms of biological role, possesses beta-1,3-endoglucanase activity in vitro. May play a role in fruit pulp softening process. Can cleave beta-1,6-branched glucans in vitro. The chain is Glucan endo-1,3-beta-glucosidase from Musa acuminata (Banana).